A 1043-amino-acid chain; its full sequence is MSKIKPLSKSSQDLSLLTSDIASFASSIGLASALPSSGFNDTDFRKPAKSKTQKRKKPKKDQQHKDEDEEGEPKSNIGNEKGKDFGARKQNKDAPVKQTLQPKPKPGFLSIDDESTGYKKKRFDEFKSLPKLPLVKASLLSSEWYNDAAEFEEKVFGGRKVAVANKEDFKGVVEKKRELGERLMWQYAEDFATSKGKGGDMKMVISAQKSGTVADKITAFEIMVGENPIANMRSLDALLGMVTSKVGKRFAFKGLKALSEILIRLLPDRKLKSLLQRPLNIIPENKDGYSLLLFWYWEDCLKQRYERFVTALDESSKDMLPELKDKALKTIYFMLTSKSEQERKLLVSLVNKLGDPQNKSASNADYHLTNLLADHPNMKAVVIDEVDSFLFRPHLGLRAKYHAVNFLSQIRLSHKGEDPKVAKRLIDVYFALFKVLTTEANRKQGADDKGAADKKKSNPKDTKQEVSTDSPIELDSRILSALLTGVNRAFPYVSTDEADDIIESQTPVLFKLVHSANFNVGVQSLMLLDKISSKNKIVSDRFYRALYSKLLLPSAMNSSKAEMFIGLLLRAMKNDINIKRVAAFSKRVLQVALQQPPQYACGCLFLLSEVLKSRPPLWKMVVQRESVEEEEDIEHFEDVIEGDDVDPNKKAENDENVVEVDHDGVEKSSRDGDSSSDDEEALAIRLSDEEDDNASDDSEELIRNETPQLEEVMEVSNDMEKRSQPPMRPSSLPGGYDPRHREPSYCNADRASWWELGVLSKHAHPSVATMAGTLLSGTNIVYNGNPLNDLSLTAFLDKFMEKKPKQNTWHGGSQIEPSKKLDMSNRVIGAEILSLAEGDVAPEDLVFHKFYVNKMTSTKQSKKKKKKKLPEEEAAEELYDVNDGDGGENYDSDVEFEAGDESDNEEIENMLDDVDDNAVEEEGGEYDYDDLDGVAGEDDEELVADVSDAEMDTDMDMDLIDDEDDNNVDDDGTGDGGDDDSDGDDGRSKKKKKEKRKRKSPFASLEEYKHLIDQDEKEDSKTKRKATSEPTKKKKKKKSKASE.

4 disordered regions span residues 32–113 (SALP…SIDD), 444–469 (QGADDKGAADKKKSNPKDTKQEVSTD), 632–737 (DIEH…GGYD), and 861–1043 (SKKK…KASE). Residues 44–51 (FRKPAKSK) carry the Nuclear localization signal 1 motif. The segment covering 47 to 59 (PAKSKTQKRKKPK) has biased composition (basic residues). Basic and acidic residues-rich tracts occupy residues 80-95 (EKGKDFGARKQNKDAP) and 444-466 (QGADDKGAADKKKSNPKDTKQEV). The short motif at 441–448 (NRKQGADD) is the Nuclear localization signal 2 element. Over residues 632–645 (DIEHFEDVIEGDDV) the composition is skewed to acidic residues. The segment covering 646-673 (DPNKKAENDENVVEVDHDGVEKSSRDGD) has biased composition (basic and acidic residues). Composition is skewed to acidic residues over residues 688 to 699 (DEEDDNASDDSE) and 872 to 983 (EEAA…DSDG). Residues 988-1000 (SKKKKKEKRKRKS) are compositionally biased toward basic residues. Basic and acidic residues predominate over residues 1006 to 1031 (EEYKHLIDQDEKEDSKTKRKATSEPT). The Nuclear localization signal 3 signature appears at 1022-1029 (TKRKATSE). The segment covering 1032–1043 (KKKKKKKSKASE) has biased composition (basic residues).

It belongs to the CBF/MAK21 family. In terms of assembly, interacts with RBL in both the nucleolus and nucleoplasm. Binds to NOC2. Mainly expressed in actively dividing tissues (e.g. root tips, lateral root primordia, shoot apices, young leaves, inflorescences and pollen grains) through the plant, including roots, stems, leaves, inflorescences, siliques and seedlings, and in gametophytes.

Its subcellular location is the nucleus. The protein localises to the nucleolus. Its function is as follows. Together with NOC2, probably involved in pre-ribosome export from the nucleus to the cytoplasm. Required for coordinated cell cycle progression during female gametophyte and pollen development. In Arabidopsis thaliana (Mouse-ear cress), this protein is Protein SLOW WALKER 2.